Consider the following 657-residue polypeptide: Matrix metalloproteinase-15 (657 aa).

The first 36 residues, 1–36, serve as a signal peptide directing secretion; that stretch reads MGSDRSALGRPGCTGSCLSSRASLLPLLLVLLDCLG. A propeptide spanning residues 37-127 is cleaved from the precursor; that stretch reads HGTASKDAEV…KANLRRRRKR (91 aa). The short motif at 105-112 is the Cysteine switch element; sequence PRCGVPDQ. C107 is a Zn(2+) binding site. Residues 128–614 lie on the Extracellular side of the membrane; sequence YTLTGKAWNN…MEEVVRTVNV (487 aa). An N-linked (GlcNAc...) asparagine glycan is attached at N146. H255 provides a ligand contact to Zn(2+). E256 is a catalytic residue. Positions 259 and 265 each coordinate Zn(2+). The disordered stretch occupies residues 295 to 365; it reads IQQLYGSPDG…ERPDQYGPNI (71 aa). Residues 328–337 show a composition bias toward pro residues; sequence PRPPQPPHPG. 4 Hemopexin repeats span residues 363-411, 412-457, 459-507, and 508-555; these read PNIC…WRGL, PGNI…GTDI, YDRI…QGIP, and TSPK…FMGC. C366 and C555 are oxidised to a cystine. Residue N414 is glycosylated (N-linked (GlcNAc...) asparagine). The disordered stretch occupies residues 561-599; it reads PRSRWPDVARPPFNPNGGAEPEADGDSKEENAGDKDEGS. The span at 585–599 shows a compositional bias: basic and acidic residues; that stretch reads GDSKEENAGDKDEGS. A helical transmembrane segment spans residues 615–635; that stretch reads VMVLVPLLLLLCILGLAFALV. At 636–657 the chain is on the cytoplasmic side; the sequence is QMQRKGAPRMLLYCKRSLQEWV.

Belongs to the peptidase M10A family. Requires Zn(2+) as cofactor. The cofactor is Ca(2+). In terms of processing, the precursor is cleaved by a furin endopeptidase.

The protein localises to the membrane. In terms of biological role, endopeptidase that degrades various components of the extracellular matrix. May activate progelatinase A. The protein is Matrix metalloproteinase-15 (Mmp15) of Mus musculus (Mouse).